The following is a 612-amino-acid chain: Chaperone protein DnaK (612 aa).

T173 carries the phosphothreonine; by autocatalysis modification. The tract at residues 576-612 is disordered; that stretch reads AAKQAQAQQDGGAGAKKADDNVVDAEYEEVNDDKDQK. Positions 596–612 are enriched in acidic residues; the sequence is NVVDAEYEEVNDDKDQK.

This sequence belongs to the heat shock protein 70 family.

Acts as a chaperone. This Bacillus licheniformis (strain ATCC 14580 / DSM 13 / JCM 2505 / CCUG 7422 / NBRC 12200 / NCIMB 9375 / NCTC 10341 / NRRL NRS-1264 / Gibson 46) protein is Chaperone protein DnaK.